The chain runs to 278 residues: Diaminopimelate epimerase (278 aa).

Substrate contacts are provided by asparagine 11 and asparagine 75. The active-site Proton donor is cysteine 84. Residues 85 to 86, asparagine 160, asparagine 195, and 213 to 214 each bind substrate; these read GN and ER. The Proton acceptor role is filled by cysteine 222. A substrate-binding site is contributed by 223–224; it reads GT.

It belongs to the diaminopimelate epimerase family. In terms of assembly, homodimer.

It is found in the cytoplasm. It catalyses the reaction (2S,6S)-2,6-diaminopimelate = meso-2,6-diaminopimelate. It participates in amino-acid biosynthesis; L-lysine biosynthesis via DAP pathway; DL-2,6-diaminopimelate from LL-2,6-diaminopimelate: step 1/1. Catalyzes the stereoinversion of LL-2,6-diaminopimelate (L,L-DAP) to meso-diaminopimelate (meso-DAP), a precursor of L-lysine and an essential component of the bacterial peptidoglycan. This chain is Diaminopimelate epimerase, found in Corynebacterium aurimucosum (strain ATCC 700975 / DSM 44827 / CIP 107346 / CN-1) (Corynebacterium nigricans).